Consider the following 237-residue polypeptide: Survival of motor neuron-related-splicing factor 30 (237 aa).

The span at 52 to 69 (SQPAEGTTSTKSSETVAP) shows a compositional bias: polar residues. Disordered stretches follow at residues 52-73 (SQPAEGTTSTKSSETVAPSHSW) and 149-198 (REYK…RSIF). The Tudor domain maps to 72–132 (SWRVGDHCMA…KKVEEGRIRD (61 aa)). The Nuclear localization signal motif lies at 142-160 (KELQAEQREYKKKKAQKKV). The segment covering 151–161 (YKKKKAQKKVQ) has biased composition (basic residues). A compositionally biased stretch (basic and acidic residues) spans 162-175 (RMKELEQEREDQKS). A compositionally biased stretch (polar residues) spans 176–185 (KWQQFNNKAY).

The protein belongs to the SMN family. Associates with spliceosomes.

It localises to the nucleus speckle. It is found in the nucleus. The protein resides in the cajal body. In terms of biological role, involved in spliceosome assembly. The chain is Survival of motor neuron-related-splicing factor 30 (smndc1) from Danio rerio (Zebrafish).